We begin with the raw amino-acid sequence, 3313 residues long: Cadherin EGF LAG seven-pass G-type receptor 3 (3313 aa).

Positions 1–31 are cleaved as a signal peptide; that stretch reads MARRPLWWGLPGPSTPLLLLLLFSLFPSSRE. The Extracellular portion of the chain corresponds to 32-2538; the sequence is EMGGGGDQGW…RLEGDLELLA (2507 aa). 2 disordered regions span residues 148-187 and 205-269; these read LPLD…RNGR and EPGH…RMRS. The span at 258 to 268 shows a compositional bias: basic and acidic residues; it reads HESRTAPERMR. Cadherin domains follow at residues 317 to 424, 425 to 536, 537 to 642, 643 to 747, 748 to 849, 850 to 952, 953 to 1058, 1059 to 1160, and 1161 to 1257; these read PQYN…APVF, EQAQ…APQF, SEKR…SPIF, VSTP…RPEF, TMKE…RPVF, QSAH…APQF, VASH…APVF, PAEE…SPVL, and NNFQ…VVII. Residue asparagine 623 is glycosylated (N-linked (GlcNAc...) asparagine). Asparagine 838 carries N-linked (GlcNAc...) asparagine glycosylation. N-linked (GlcNAc...) asparagine glycans are attached at residues asparagine 1173, asparagine 1213, asparagine 1308, and asparagine 1318. Residues 1366-1424 enclose the EGF-like 1; calcium-binding domain; the sequence is DDNVCLREPCENYMKCVSVLRFDSSAPFLASASTLFRPIQPIAGLRCRCPPGFTGDFCE. 9 disulfides stabilise this stretch: cysteine 1370–cysteine 1381, cysteine 1375–cysteine 1412, cysteine 1414–cysteine 1423, cysteine 1430–cysteine 1441, cysteine 1435–cysteine 1450, cysteine 1452–cysteine 1461, cysteine 1470–cysteine 1481, cysteine 1475–cysteine 1491, and cysteine 1493–cysteine 1504. Residues 1426-1462 enclose the EGF-like 2; calcium-binding domain; that stretch reads ELDLCYSNPCRNGGACARREGGYTCVCRPRFTGEDCE. The EGF-like 3; calcium-binding domain maps to 1466–1505; sequence EAGRCVPGVCRNGGTCTNAPNGGFRCQCPAGGAFEGPRCE. A Laminin G-like 1 domain is found at 1506–1710; the sequence is VAARSFPPSS…VANNGTTAGC (205 aa). 2 N-linked (GlcNAc...) asparagine glycosylation sites follow: asparagine 1640 and asparagine 1704. 4 cysteine pairs are disulfide-bonded: cysteine 1684/cysteine 1710, cysteine 1717/cysteine 1728, cysteine 1722/cysteine 1737, and cysteine 1739/cysteine 1748. The 37-residue stretch at 1713-1749 folds into the EGF-like 4; calcium-binding domain; it reads KSHFCASGPCKNGGLCSERWGGFSCDCPVGFGGKDCR. The Laminin G-like 2 domain maps to 1753-1935; that stretch reads AHPYHFQGNG…SHRINVEPGC (183 aa). A glycan (N-linked (GlcNAc...) asparagine) is linked at asparagine 1761. Disulfide bonds link cysteine 1906/cysteine 1935, cysteine 1941/cysteine 1952, cysteine 1946/cysteine 1961, cysteine 1963/cysteine 1972, cysteine 1976/cysteine 1987, cysteine 1981/cysteine 1999, cysteine 2001/cysteine 2010, cysteine 2018/cysteine 2031, and cysteine 2033/cysteine 2043. Residues 1937-1972 enclose the EGF-like 5; calcium-binding domain; the sequence is VTNPCASGPCPPHANCKDLWQTFSCTCWPGYYGPGC. Aspartate 1954 carries the post-translational modification (3R)-3-hydroxyaspartate. Residues 1973-2011 enclose the EGF-like 6; calcium-binding domain; that stretch reads VDACLLNPCQNQGSCRHLQGGPHGYTCDCASGYFGQHCE. One can recognise an EGF-like 7; calcium-binding domain in the interval 2012–2044; that stretch reads HRMDQQCPRGWWGSPTCGPCNCDVHKGFDPNCN. N-linked (GlcNAc...) asparagine glycosylation occurs at asparagine 2044. The EGF-like 8; calcium-binding domain maps to 2046–2081; it reads TSGQCHCKEFHYRPRGSDSCLPCDCYPVGSTSRSCA. 5 disulfides stabilise this stretch: cysteine 2050–cysteine 2065, cysteine 2052–cysteine 2068, cysteine 2070–cysteine 2080, cysteine 2089–cysteine 2098, and cysteine 2101–cysteine 2113. The 48-residue stretch at 2068 to 2115 folds into the Laminin EGF-like domain; sequence CDCYPVGSTSRSCAPHSGQCPCRPGALGRQCNSCDSPFAEVTASGCRV. Tyrosine 2117 carries the post-translational modification Phosphotyrosine. N-linked (GlcNAc...) asparagine glycosylation is found at asparagine 2173, asparagine 2192, asparagine 2382, asparagine 2472, and asparagine 2504. The interval 2356 to 2395 is disordered; sequence HTHVLLPSQSPQPSPSEVLPTSSNAENATASGVVSPPAPL. In terms of domain architecture, GAIN-B spans 2364–2528; sequence QSPQPSPSEV…GVLMDASPRE (165 aa). The span at 2374-2387 shows a compositional bias: polar residues; sequence LPTSSNAENATASG. 2 disulfides stabilise this stretch: cysteine 2478–cysteine 2510 and cysteine 2498–cysteine 2512. The segment at 2478–2528 is GPS; sequence CVQWDPPGPADQHGMWTARDCELVHRNGSHARCRCSRTGTFGVLMDASPRE. The helical transmembrane segment at 2539–2559 threads the bilayer; the sequence is VFTHVVVAASVTALVLTAAVL. Residues 2560–2570 are Cytoplasmic-facing; sequence LSLRSLKSNVR. Residues 2571–2591 traverse the membrane as a helical segment; it reads GIHANVAAALGVAELLFLLGI. Topologically, residues 2592–2599 are extracellular; that stretch reads HRTHNQLL. The helical transmembrane segment at 2600–2620 threads the bilayer; the sequence is CTVVAILLHYFFLSTFAWLLV. Residues 2621 to 2641 are Cytoplasmic-facing; it reads QGLHLYRMQVEPRNVDRGAMR. The chain crosses the membrane as a helical span at residues 2642–2662; the sequence is FYHALGWGVPAVLLGLAVGLD. Residues 2663–2679 lie on the Extracellular side of the membrane; that stretch reads PEGYGNPDFCWISIHEP. The chain crosses the membrane as a helical span at residues 2680–2700; sequence LIWSFAGPIVLVIVMNGIMFL. At 2701–2724 the chain is on the cytoplasmic side; that stretch reads LAARTSCSTGQREAKKTSVLRTLR. A helical transmembrane segment spans residues 2725–2745; the sequence is SSFLLLLLVSASWLFGLLAVN. The Extracellular portion of the chain corresponds to 2746-2752; the sequence is HSVLAFH. The chain crosses the membrane as a helical span at residues 2753-2773; that stretch reads YLHAGLCGLQGLAVLLLFCVL. At 2774–3313 the chain is on the cytoplasmic side; that stretch reads NADARAAWTP…SEVPRSEGHS (540 aa). Disordered regions lie at residues 2887 to 2927 and 2977 to 3004; these read AGAD…RPLR and SNKD…RAQR. Residues 2889-2899 are compositionally biased toward acidic residues; it reads ADSDSDSDLSL. The span at 2918–2927 shows a compositional bias: basic residues; that stretch reads TRGRFQRPLR. The residue at position 3050 (tyrosine 3050) is a Phosphotyrosine. 2 disordered regions span residues 3091–3242 and 3255–3313; these read APVL…PSTE and NSSA…EGHS. A Phosphoserine modification is found at serine 3098. Residues 3102-3119 are compositionally biased toward basic and acidic residues; sequence SQERLDTAPARLEPRDRG. Low complexity-rich tracts occupy residues 3178–3197 and 3255–3289; these read QRPL…SLSR and NSSA…PSTP. A compositionally biased stretch (polar residues) spans 3290–3301; it reads RSATSHSISELS.

This sequence belongs to the G-protein coupled receptor 2 family. LN-TM7 subfamily. Post-translationally, the iron and 2-oxoglutarate dependent 3-hydroxylation of aspartate and asparagine is (R) stereospecific within EGF domains. Expressed in the brain. Expressed in cerebellum, olfactory bulb, cerebral cortex, hippocampus and brain stem.

The protein localises to the cell membrane. Receptor that may have an important role in cell/cell signaling during nervous system formation. The polypeptide is Cadherin EGF LAG seven-pass G-type receptor 3 (Celsr3) (Rattus norvegicus (Rat)).